The sequence spans 88 residues: Defensin-like protein 24 (88 aa).

The first 23 residues, 1–23, serve as a signal peptide directing secretion; it reads MASSKFVLFAILALSLLLSGTEA. Intrachain disulfides connect C37/C87, C47/C72, C56/C83, and C60/C85.

It belongs to the DEFL family.

The protein resides in the secreted. The chain is Defensin-like protein 24 from Arabidopsis thaliana (Mouse-ear cress).